Consider the following 133-residue polypeptide: Large-conductance mechanosensitive channel (133 aa).

2 consecutive transmembrane segments (helical) span residues 17-37 (AFILKGNVVELAVAVIIGGAF) and 73-93 (IGSFAGSVIDFLIIAFVLYLA).

The protein belongs to the MscL family. Homopentamer.

The protein localises to the cell inner membrane. Channel that opens in response to stretch forces in the membrane lipid bilayer. May participate in the regulation of osmotic pressure changes within the cell. In Synechococcus elongatus (strain ATCC 33912 / PCC 7942 / FACHB-805) (Anacystis nidulans R2), this protein is Large-conductance mechanosensitive channel.